A 781-amino-acid chain; its full sequence is Coiled-coil and C2 domain-containing protein 1-like (781 aa).

Disordered regions lie at residues 32 to 63 (MGRVSRPAAPARGAPPAARGRPAPAAPANVPG), 94 to 134 (ELNG…APNS), 187 to 296 (ESEI…AKES), 313 to 373 (CSAD…TEGN), and 403 to 447 (GELP…VEGK). The span at 37-59 (RPAAPARGAPPAARGRPAPAAPA) shows a compositional bias: low complexity. Residues 98 to 107 (LVGGGGGGGA) are compositionally biased toward gly residues. The span at 108 to 118 (APTVPTRAAPR) shows a compositional bias: low complexity. 2 stretches are compositionally biased toward pro residues: residues 119–129 (APGPSGPPPSA) and 204–222 (PLPPPAPTAQPAHHPPAPP). Residues 244 to 256 (APAPTAAAPPATK) show a composition bias toward low complexity. Positions 269-280 (ILHHRRDLHKQN) are enriched in basic residues. The segment covering 285–296 (IADKDKESAKES) has biased composition (basic and acidic residues). Pro residues predominate over residues 324-341 (PPSPPPYRKPAPPQPQAP). The span at 363–373 (KMAEKAKTEGN) shows a compositional bias: basic and acidic residues. Residues 605–741 (YEMRQIPSAD…EHSAEMEESL (137 aa)) form the C2 domain.

Belongs to the CC2D1 family.

The sequence is that of Coiled-coil and C2 domain-containing protein 1-like from Caenorhabditis elegans.